Here is an 861-residue protein sequence, read N- to C-terminus: E3 ubiquitin-protein ligase SH3RF1 (861 aa).

An RING-type zinc finger spans residues 12 to 53 (CPVCLERLDASAKVLPCQHTFCKRCLLGIVSSRNELRCPECR). 2 consecutive SH3 domains span residues 132–191 (PQLP…IIKP) and 194–257 (QPPP…FNSA). Residues 268 to 319 (SGVDTGEGSSGTTHSSNSQKQADAKKNTKKRHSFTSLTMSNKSSQSVQNRHS) form a disordered region. A compositionally biased stretch (low complexity) spans 273-285 (GEGSSGTTHSSNS). Polar residues predominate over residues 301–317 (FTSLTMSNKSSQSVQNR). Residues 435 to 496 (TRPSVFVAIY…PGNYVAPVTR (62 aa)) form the SH3 3 domain. Residues 684–731 (NSAANKQDKDSKKEKKGLLKLLSGASTKRKPRSSPPHSPTQELEQTNS) are disordered. The segment covering 689-700 (KQDKDSKKEKKG) has biased composition (basic and acidic residues). Residues 802–861 (RPCERYRVVVSYPPQSEAELELKEGDIVFVHKKREDGWFKGTLQRNGKTGLFPGSFVENI) enclose the SH3 4 domain.

The protein belongs to the SH3RF family. Autoubiquitinated. Ubiquitinated by SH3RF2, leading to proteasome-mediated degradation.

It localises to the cytoplasm. Its subcellular location is the perinuclear region. It is found in the cell projection. The protein localises to the lamellipodium. The protein resides in the golgi apparatus. It localises to the trans-Golgi network. It carries out the reaction S-ubiquitinyl-[E2 ubiquitin-conjugating enzyme]-L-cysteine + [acceptor protein]-L-lysine = [E2 ubiquitin-conjugating enzyme]-L-cysteine + N(6)-ubiquitinyl-[acceptor protein]-L-lysine.. It functions in the pathway protein modification; protein ubiquitination. In terms of biological role, has E3 ubiquitin-protein ligase activity. In the absence of an external substrate, it can catalyze self-ubiquitination. Acts as a scaffold protein that contributes to the effective activation of the JNK signaling pathway. This Xenopus tropicalis (Western clawed frog) protein is E3 ubiquitin-protein ligase SH3RF1 (sh3rf1).